Reading from the N-terminus, the 406-residue chain is Mitochondrial potassium channel (406 aa).

The transit peptide at 1–35 (MTGCSPVFAMQHVVGVPRILVRRTFLGTDVTMTRT) directs the protein to the mitochondrion. Over 36–198 (LCSPGPREKR…KERTRAERTK (163 aa)) the chain is Mitochondrial matrix. A coiled-coil region spans residues 113–140 (VREAREGLEAQQTKLKEVRDRLDRVSRE). A helical membrane pass occupies residues 199 to 219 (NWSLIGSVLGALIGVAGSTYV). The Mitochondrial intermembrane segment spans residues 220 to 382 (NRVRLQELKA…LEAQANRNTV (163 aa)). A helical transmembrane segment spans residues 383–403 (SSTLVTCVTFLATLPLLYMLF). Residues 404–406 (KTS) lie on the Mitochondrial matrix side of the membrane.

In terms of assembly, the mitochondrial potassium channel (mitoK(ATP)) is composed of 4 subunits of CCDC51/MITOK and 4 subunits of ABCB8/MITOSUR.

It localises to the mitochondrion inner membrane. The enzyme catalyses K(+)(in) = K(+)(out). Inhibited by ATP via mitoK(ATP) channel. Pore-forming subunit of the mitochondrial ATP-gated potassium channel (mitoK(ATP)). Together with ATP-binding subunit ABCB8/MITOSUR of the mitoK(ATP) channel, mediates ATP-dependent K(+) currents across the mitochondrial inner membrane. An increase in ATP intracellular levels closes the channel, inhibiting K(+) transport, whereas a decrease in ATP levels enhances K(+) uptake in the mitochondrial matrix. May contribute to the homeostatic control of cellular metabolism under stress conditions by regulating the mitochondrial matrix volume. The polypeptide is Mitochondrial potassium channel (Mus musculus (Mouse)).